We begin with the raw amino-acid sequence, 630 residues long: Ankyrin repeat protein OPG025 (630 aa).

6 ANK repeats span residues aspartate 36 to isoleucine 69, asparagine 70 to serine 100, asparagine 103 to serine 134, methionine 174 to histidine 210, lysine 338 to asparagine 367, and histidine 408 to isoleucine 437.

It belongs to the orthopoxvirus OPG025 family. As to quaternary structure, interacts with components of host SCF complex CUL1 and SKP1 and components of the cullin deneddylation/COP9 signalosome complex subunits COPS7A and COPS7B.

Its function is as follows. Plays a role in the inhibition of host immune repsonse by counteracting the action of interferons on early events in the viral replication cycle. This Monkeypox virus protein is Ankyrin repeat protein OPG025 (OPG025).